Reading from the N-terminus, the 119-residue chain is Large ribosomal subunit protein uL24 (119 aa).

This sequence belongs to the universal ribosomal protein uL24 family. As to quaternary structure, part of the 50S ribosomal subunit.

One of two assembly initiator proteins, it binds directly to the 5'-end of the 23S rRNA, where it nucleates assembly of the 50S subunit. Its function is as follows. Located at the polypeptide exit tunnel on the outside of the subunit. This chain is Large ribosomal subunit protein uL24, found in Methanococcus vannielii.